The sequence spans 149 residues: SsrA-binding protein (149 aa).

Belongs to the SmpB family.

It is found in the cytoplasm. Functionally, required for rescue of stalled ribosomes mediated by trans-translation. Binds to transfer-messenger RNA (tmRNA), required for stable association of tmRNA with ribosomes. tmRNA and SmpB together mimic tRNA shape, replacing the anticodon stem-loop with SmpB. tmRNA is encoded by the ssrA gene; the 2 termini fold to resemble tRNA(Ala) and it encodes a 'tag peptide', a short internal open reading frame. During trans-translation Ala-aminoacylated tmRNA acts like a tRNA, entering the A-site of stalled ribosomes, displacing the stalled mRNA. The ribosome then switches to translate the ORF on the tmRNA; the nascent peptide is terminated with the 'tag peptide' encoded by the tmRNA and targeted for degradation. The ribosome is freed to recommence translation, which seems to be the essential function of trans-translation. This is SsrA-binding protein from Anaplasma marginale (strain St. Maries).